A 31-amino-acid chain; its full sequence is Cytochrome b6-f complex subunit 6 (31 aa).

Residues 4 to 24 traverse the membrane as a helical segment; sequence LLSYFAFLMLALTFTLALFVG.

The protein belongs to the PetL family. The 4 large subunits of the cytochrome b6-f complex are cytochrome b6, subunit IV (17 kDa polypeptide, PetD), cytochrome f and the Rieske protein, while the 4 small subunits are PetG, PetL, PetM and PetN. The complex functions as a dimer.

It localises to the plastid. Its subcellular location is the chloroplast thylakoid membrane. Its function is as follows. Component of the cytochrome b6-f complex, which mediates electron transfer between photosystem II (PSII) and photosystem I (PSI), cyclic electron flow around PSI, and state transitions. PetL is important for photoautotrophic growth as well as for electron transfer efficiency and stability of the cytochrome b6-f complex. The protein is Cytochrome b6-f complex subunit 6 of Adiantum capillus-veneris (Maidenhair fern).